The primary structure comprises 338 residues: Flap endonuclease 1 (338 aa).

Positions Met1 to Arg98 are N-domain. Mg(2+)-binding residues include Asp27, Asp80, Glu152, Glu154, Asp173, Asp175, and Asp236. Residues Ala116–Gly257 are I-domain. Residues Arg330 to Phe338 are interaction with PCNA.

The protein belongs to the XPG/RAD2 endonuclease family. FEN1 subfamily. Interacts with PCNA. PCNA stimulates the nuclease activity without altering cleavage specificity. Mg(2+) is required as a cofactor.

Functionally, structure-specific nuclease with 5'-flap endonuclease and 5'-3' exonuclease activities involved in DNA replication and repair. During DNA replication, cleaves the 5'-overhanging flap structure that is generated by displacement synthesis when DNA polymerase encounters the 5'-end of a downstream Okazaki fragment. Binds the unpaired 3'-DNA end and kinks the DNA to facilitate 5' cleavage specificity. Cleaves one nucleotide into the double-stranded DNA from the junction in flap DNA, leaving a nick for ligation. Also involved in the base excision repair (BER) pathway. Acts as a genome stabilization factor that prevents flaps from equilibrating into structures that lead to duplications and deletions. Also possesses 5'-3' exonuclease activity on nicked or gapped double-stranded DNA. The polypeptide is Flap endonuclease 1 (Methanosarcina barkeri (strain Fusaro / DSM 804)).